We begin with the raw amino-acid sequence, 267 residues long: Putative N-acetylmuramoyl-L-alanine amidase RC0497 (267 aa).

The disordered stretch occupies residues 1–25; it reads MSKSKAIENNGISNTNSPNGKYMAP. The span at 10-19 shows a compositional bias: polar residues; it reads NGISNTNSPN. The 109-residue stretch at 33–141 folds into the N-acetylmuramoyl-L-alanine amidase domain; the sequence is TCVVITYSVS…NLDLKHDLVG (109 aa).

Belongs to the N-acetylmuramoyl-L-alanine amidase 2 family.

It is found in the secreted. It catalyses the reaction Hydrolyzes the link between N-acetylmuramoyl residues and L-amino acid residues in certain cell-wall glycopeptides.. This Rickettsia conorii (strain ATCC VR-613 / Malish 7) protein is Putative N-acetylmuramoyl-L-alanine amidase RC0497.